Consider the following 201-residue polypeptide: Peptidyl-tRNA hydrolase (201 aa).

Tyr-14 provides a ligand contact to tRNA. Catalysis depends on His-19, which acts as the Proton acceptor. The tRNA site is built by Tyr-64, Asn-66, and Asn-112.

It belongs to the PTH family. Monomer.

The protein localises to the cytoplasm. It carries out the reaction an N-acyl-L-alpha-aminoacyl-tRNA + H2O = an N-acyl-L-amino acid + a tRNA + H(+). Its function is as follows. Hydrolyzes ribosome-free peptidyl-tRNAs (with 1 or more amino acids incorporated), which drop off the ribosome during protein synthesis, or as a result of ribosome stalling. In terms of biological role, catalyzes the release of premature peptidyl moieties from peptidyl-tRNA molecules trapped in stalled 50S ribosomal subunits, and thus maintains levels of free tRNAs and 50S ribosomes. The chain is Peptidyl-tRNA hydrolase from Afipia carboxidovorans (strain ATCC 49405 / DSM 1227 / KCTC 32145 / OM5) (Oligotropha carboxidovorans).